We begin with the raw amino-acid sequence, 103 residues long: Histone H4 (103 aa).

At Lys-6 the chain carries N6-acetyl-N6-methyllysine; alternate. N6-methyllysine; alternate is present on residues Lys-6, Lys-9, and Lys-13. Residue Lys-13 is modified to N6-acetyl-N6-methyllysine; alternate. Residues 17–21 mediate DNA binding; the sequence is KRHRK. Lys-92 is subject to N6-glutaryllysine.

Belongs to the histone H4 family. In terms of assembly, the nucleosome is a histone octamer containing two molecules each of H2A, H2B, H3 and H4 assembled in one H3-H4 heterotetramer and two H2A-H2B heterodimers. The octamer wraps approximately 147 bp of DNA. Glutarylation at Lys-92 (H4K91glu) destabilizes nucleosomes by promoting dissociation of the H2A-H2B dimers from nucleosomes.

It localises to the nucleus. Its subcellular location is the chromosome. In terms of biological role, core component of nucleosome. Nucleosomes wrap and compact DNA into chromatin, limiting DNA accessibility to the cellular machineries which require DNA as a template. Histones thereby play a central role in transcription regulation, DNA repair, DNA replication and chromosomal stability. DNA accessibility is regulated via a complex set of post-translational modifications of histones, also called histone code, and nucleosome remodeling. The chain is Histone H4 (H4.1) from Mortierella alpina (Oleaginous fungus).